A 130-amino-acid chain; its full sequence is MKSLGRHIIAEFYDCNKEILDNVEAIEKSMKEAAYETGATLVNSSFHRFLPYGVSGVVVISESHLTIHTWPEYGYAAVDLFTCGDDVDPWKAFSYLKKILKSQRVHVVEHLRGKYDEIGIPENSPHKMEV.

Ser-63 (schiff-base intermediate with substrate; via pyruvic acid) is an active-site residue. Pyruvic acid (Ser); by autocatalysis is present on Ser-63. His-68 functions as the Proton acceptor; for processing activity in the catalytic mechanism. Cys-83 (proton donor; for catalytic activity) is an active-site residue.

The protein belongs to the prokaryotic AdoMetDC family. Type 1 subfamily. In terms of assembly, heterotetramer of two alpha and two beta chains arranged as a dimer of alpha/beta heterodimers. The cofactor is pyruvate. Post-translationally, is synthesized initially as an inactive proenzyme. Formation of the active enzyme involves a self-maturation process in which the active site pyruvoyl group is generated from an internal serine residue via an autocatalytic post-translational modification. Two non-identical subunits are generated from the proenzyme in this reaction, and the pyruvate is formed at the N-terminus of the alpha chain, which is derived from the carboxyl end of the proenzyme. The post-translation cleavage follows an unusual pathway, termed non-hydrolytic serinolysis, in which the side chain hydroxyl group of the serine supplies its oxygen atom to form the C-terminus of the beta chain, while the remainder of the serine residue undergoes an oxidative deamination to produce ammonia and the pyruvoyl group blocking the N-terminus of the alpha chain.

It carries out the reaction S-adenosyl-L-methionine + H(+) = S-adenosyl 3-(methylsulfanyl)propylamine + CO2. The protein operates within amine and polyamine biosynthesis; S-adenosylmethioninamine biosynthesis; S-adenosylmethioninamine from S-adenosyl-L-methionine: step 1/1. Its function is as follows. Catalyzes the decarboxylation of S-adenosylmethionine to S-adenosylmethioninamine (dcAdoMet), the propylamine donor required for the synthesis of the polyamines spermine and spermidine from the diamine putrescine. The polypeptide is S-adenosylmethionine decarboxylase proenzyme (Thermosipho melanesiensis (strain DSM 12029 / CIP 104789 / BI429)).